A 141-amino-acid chain; its full sequence is Large ribosomal subunit protein uL11 (141 aa).

The protein belongs to the universal ribosomal protein uL11 family. As to quaternary structure, part of the ribosomal stalk of the 50S ribosomal subunit. Interacts with L10 and the large rRNA to form the base of the stalk. L10 forms an elongated spine to which L12 dimers bind in a sequential fashion forming a multimeric L10(L12)X complex. In terms of processing, one or more lysine residues are methylated.

Its function is as follows. Forms part of the ribosomal stalk which helps the ribosome interact with GTP-bound translation factors. The polypeptide is Large ribosomal subunit protein uL11 (Streptococcus agalactiae serotype III (strain NEM316)).